The following is a 250-amino-acid chain: tRNA (guanine-N(7)-)-methyltransferase (250 aa).

Glu-86, Glu-111, Asp-138, and Asp-161 together coordinate S-adenosyl-L-methionine. Asp-161 is a catalytic residue. Residues Lys-165, Asp-197, and 229-232 (TEFE) contribute to the substrate site.

This sequence belongs to the class I-like SAM-binding methyltransferase superfamily. TrmB family.

It carries out the reaction guanosine(46) in tRNA + S-adenosyl-L-methionine = N(7)-methylguanosine(46) in tRNA + S-adenosyl-L-homocysteine. It participates in tRNA modification; N(7)-methylguanine-tRNA biosynthesis. In terms of biological role, catalyzes the formation of N(7)-methylguanine at position 46 (m7G46) in tRNA. The chain is tRNA (guanine-N(7)-)-methyltransferase from Treponema pallidum (strain Nichols).